We begin with the raw amino-acid sequence, 157 residues long: E3 ubiquitin-protein ligase RHA1B (157 aa).

The segment at 85–129 (CTVCLSDFVSDDKIRQLPKCGHVFHHRCLDRWIVDCNKITCPICR) adopts an RING-type; atypical zinc-finger fold.

The enzyme catalyses S-ubiquitinyl-[E2 ubiquitin-conjugating enzyme]-L-cysteine + [acceptor protein]-L-lysine = [E2 ubiquitin-conjugating enzyme]-L-cysteine + N(6)-ubiquitinyl-[acceptor protein]-L-lysine.. It participates in protein modification; protein ubiquitination. Possesses E3 ubiquitin-protein ligase activity when associated with the E2 enzyme UBC8 in vitro. In Arabidopsis thaliana (Mouse-ear cress), this protein is E3 ubiquitin-protein ligase RHA1B.